The primary structure comprises 397 residues: MGDQRPRDRPRSPGMDCKPWYCDKPPSKYIAKRKHRRLRFPPMDTQNWVFVKESMDSFHYGCPSPEDMLICRLNEFLLPKISHRGPQADPKSRQKKLLKKVALFSKLLPAQPAWKAFVEEAQLMAKHPLAMYPNLGEDMPPDLLLQMLKLLDPERKLEKAWAYCEGREKTIKEPTKPEPPKAPVSHHFLEPPKIRASCLKELLQEDTPSTTECVSDSLQHRYTSRKMHDFKWARDMGVDEESIRNLFDFTPKWRATYEDQQIKKIKEWVSELQYRIKLDEMDEVESSQEKDWDRKLQMAPNSYTAQCVKMRYGVWYLKPKLGKKLRSDQPLIDPKLLLEKPDEPDILDDLYGPIAFKDFILSKGYEMPGIIERLCARKGWTYDSVKTPVQRAMRLYK.

This sequence belongs to the FAM47 family.

This chain is Putative protein FAM47D (FAM47DP), found in Homo sapiens (Human).